We begin with the raw amino-acid sequence, 206 residues long: Dephospho-CoA kinase (206 aa).

The 197-residue stretch at 4-200 (IVALTGGIGS…AHYLQLASQF (197 aa)) folds into the DPCK domain. 12 to 17 (GSGKST) lines the ATP pocket.

The protein belongs to the CoaE family.

The protein localises to the cytoplasm. The catalysed reaction is 3'-dephospho-CoA + ATP = ADP + CoA + H(+). The protein operates within cofactor biosynthesis; coenzyme A biosynthesis; CoA from (R)-pantothenate: step 5/5. Catalyzes the phosphorylation of the 3'-hydroxyl group of dephosphocoenzyme A to form coenzyme A. The chain is Dephospho-CoA kinase from Shigella flexneri.